Reading from the N-terminus, the 156-residue chain is Small ribosomal subunit protein uS7 (156 aa).

Belongs to the universal ribosomal protein uS7 family. As to quaternary structure, part of the 30S ribosomal subunit. Contacts proteins S9 and S11.

Its function is as follows. One of the primary rRNA binding proteins, it binds directly to 16S rRNA where it nucleates assembly of the head domain of the 30S subunit. Is located at the subunit interface close to the decoding center, probably blocks exit of the E-site tRNA. This is Small ribosomal subunit protein uS7 from Allorhizobium ampelinum (strain ATCC BAA-846 / DSM 112012 / S4) (Agrobacterium vitis (strain S4)).